A 253-amino-acid polypeptide reads, in one-letter code: MKTVNIRGVILGEGIPKVCTPLVGRSLKELREEINLLKDIDCDLVEFRADFFEHVENIQKVKEVLLEIREALKEKPILFTFRSAKEGGEREVESEFYCKLNKEIIKTKLIDAIDIELFNEEESILELIKIAHDEDVKVVMSNHDFHKTPPKEEMISRLVKMQELGADVTKIAVMPKGSSDVLTLLEATNDMKIKYAKTPFITMSMKGVGMISRISGEVFGSAVTFGASKKASAPGQLQVKELKEILNVVHNVL.

3-dehydroquinate is bound by residues 46-48 and arginine 82; that span reads EFR. The active-site Proton donor/acceptor is the histidine 143. Lysine 170 (schiff-base intermediate with substrate) is an active-site residue. Arginine 213, serine 232, and glutamine 236 together coordinate 3-dehydroquinate.

The protein belongs to the type-I 3-dehydroquinase family. In terms of assembly, homodimer.

It carries out the reaction 3-dehydroquinate = 3-dehydroshikimate + H2O. Its pathway is metabolic intermediate biosynthesis; chorismate biosynthesis; chorismate from D-erythrose 4-phosphate and phosphoenolpyruvate: step 3/7. Involved in the third step of the chorismate pathway, which leads to the biosynthesis of aromatic amino acids. Catalyzes the cis-dehydration of 3-dehydroquinate (DHQ) and introduces the first double bond of the aromatic ring to yield 3-dehydroshikimate. The sequence is that of 3-dehydroquinate dehydratase from Clostridium novyi (strain NT).